A 944-amino-acid chain; its full sequence is UvrABC system protein A (944 aa).

Residues 1-242 enclose the ABC transporter 1 domain; that stretch reads MSKVDFLHIK…GKGIVKVENV (242 aa). 34–41 is a binding site for ATP; sequence GLSGSGKS. Residues 256–283 form a C4-type; degenerate zinc finger; it reads CPKGDFEMPKIETRLFSFNSPYGMCQNC. ABC transporter domains are found at residues 359 to 597 and 610 to 935; these read EEID…KYLS and SGSG…EKSY. 643–650 provides a ligand contact to ATP; it reads GVSGSGKS. A C4-type zinc finger spans residues 744 to 770; it reads CEKCSGDGSIKIEMFFLPNVYITCDHC.

The protein belongs to the ABC transporter superfamily. UvrA family. In terms of assembly, forms a heterotetramer with UvrB during the search for lesions.

It localises to the cytoplasm. In terms of biological role, the UvrABC repair system catalyzes the recognition and processing of DNA lesions. UvrA is an ATPase and a DNA-binding protein. A damage recognition complex composed of 2 UvrA and 2 UvrB subunits scans DNA for abnormalities. When the presence of a lesion has been verified by UvrB, the UvrA molecules dissociate. This is UvrABC system protein A from Mycoplasmopsis pulmonis (strain UAB CTIP) (Mycoplasma pulmonis).